The sequence spans 279 residues: MSALEWYAHKSLGDGIFWIQERFYESGNRANIWLVRGSEQDVVIDTGLGLRSLPEYLYSSGLLRDRAARDNAACRPLLAVATHVHFDHSGGLYQFDRVAVHHAEAEALARGDNFETVTWLSDSEVVRAPSPGWRARQFRVQAVQPTLVLQDGDVINLGDRQLTVMHMPGHSRGSICLHDKDRKILFSGDVVYDGSLIDWLPYSRISDYVGTCERLIELVDRGLVEKVLPGHFNTFGAERLFRLASNYISKAGICHKVSTFAMRSLASLALRVTNSRTSP.

Ser2 carries the N-acetylserine modification. Residues His83, His85, Asp87, His88, His170, Asp189, and His231 each contribute to the Zn(2+) site. Cys254 is lipidated: S-palmitoyl cysteine.

This sequence belongs to the metallo-beta-lactamase superfamily. Glyoxalase II family. It depends on Zn(2+) as a cofactor. In terms of processing, palmitoylated on Cys-254 by ZDHHC20.

The protein localises to the endoplasmic reticulum membrane. It is found in the cell membrane. The enzyme catalyses hexadecanoyl-CoA + H2O = hexadecanoate + CoA + H(+). The catalysed reaction is dodecanoyl-CoA + H2O = dodecanoate + CoA + H(+). It carries out the reaction tetradecanoyl-CoA + H2O = tetradecanoate + CoA + H(+). It catalyses the reaction octadecanoyl-CoA + H2O = octadecanoate + CoA + H(+). The enzyme catalyses a beta-lactam + H2O = a substituted beta-amino acid. Functionally, acyl-CoA thioesterases are a group of enzymes that catalyze the hydrolysis of acyl-CoAs to the free fatty acid and coenzyme A (CoASH), providing the potential to regulate intracellular levels of acyl-CoAs, free fatty acids and CoASH. Has an acyl-CoA thioesterase activity towards the long chain fatty acyl-CoA thioester palmitoyl-CoA (hexadecanoyl-CoA; C16:0-CoA). Displays a substrate preference for fatty acyl-CoAs with chain-lengths C12-C18. This is Acyl-coenzyme A thioesterase MBLAC2 (MBLAC2) from Bos taurus (Bovine).